We begin with the raw amino-acid sequence, 895 residues long: Androgen receptor (895 aa).

The modulating stretch occupies residues 1–533 (MEVQLGLGRV…PIDYYFPPQK (533 aa)). Residues 1–562 (MEVQLGLGRV…GSCKVFFKRA (562 aa)) form an interaction with ZNF318 region. Disordered regions lie at residues 33–155 (VIQN…PTFP) and 175–211 (QLLQQQQQEAVSEGSSSGRAREASGAPTSSKDNYLGG). 2 stretches are compositionally biased toward low complexity: residues 44–81 (AASAAPPGASLQQQQQQQQQETSPRQQQQQQGEDGSPQ) and 175–200 (QLLQQQQQEAVSEGSSSGRAREASGA). Serine 66 carries the post-translational modification Phosphoserine; by CDK9. At serine 79 the chain carries Phosphoserine. Residues 201-211 (PTSSKDNYLGG) show a composition bias toward polar residues. Tyrosine 208 carries the post-translational modification Phosphotyrosine; by CSK. Position 241 is a phosphoserine (serine 241). Tyrosine 252 bears the Phosphotyrosine; by CSK and TNK2 mark. A phosphotyrosine; by CSK mark is found at tyrosine 292, tyrosine 331, tyrosine 342, and tyrosine 347. Tyrosine 348 carries the phosphotyrosine; by CSK and TNK2 modification. Residue lysine 371 forms a Glycyl lysine isopeptide (Lys-Gly) (interchain with G-Cter in SUMO) linkage. A Phosphotyrosine; by CSK modification is found at tyrosine 378. A Glycyl lysine isopeptide (Lys-Gly) (interchain with G-Cter in SUMO) cross-link involves residue lysine 496. Phosphotyrosine; by CSK occurs at positions 510 and 527. Residues 527–894 (YYFPPQKTCL…GKVKPIYFHT (368 aa)) are interaction with LPXN. A DNA-binding region (nuclear receptor) is located at residues 534–607 (TCLICGDEAS…AGMTLGARKL (74 aa)). NR C4-type zinc fingers lie at residues 535-555 (CLICGDEASGCHYGALTCGSC) and 571-595 (CASRNDCTIDKFRRKNCPSCRLRKC). An interaction with HIPK3 region spans residues 547 to 637 (YGALTCGSCK…TEETAQKLTV (91 aa)). Residues 567-894 (QKYLCASRND…GKVKPIYFHT (328 aa)) are interaction with CCAR1. Positions 600–894 (MTLGARKLKK…GKVKPIYFHT (295 aa)) are interaction with KAT7. Serine 626 carries the post-translational modification Phosphoserine; by STK4/MST1. Residues 644–875 (ECQPIFLNVL…DFPEMMAEII (232 aa)) enclose the NR LBD domain. Residues asparagine 681 and arginine 728 each contribute to the 17beta-hydroxy-5alpha-androstan-3-one site. Residues lysine 821 and lysine 823 each participate in a glycyl lysine isopeptide (Lys-Gly) (interchain with G-Cter in ubiquitin) cross-link. Threonine 853 lines the 17beta-hydroxy-5alpha-androstan-3-one pocket. Tyrosine 891 carries the post-translational modification Phosphotyrosine; by CSK.

The protein belongs to the nuclear hormone receptor family. NR3 subfamily. Binds DNA as a homodimer. Part of a ternary complex containing AR, EFCAB6/DJBP and PARK7. Interacts with HIPK3 and NR0B2 in the presence of androgen. The ligand binding domain interacts with KAT7/HBO1 in the presence of dihydrotestosterone. Interacts with EFCAB6/DJBP, PQBP1, RANBP9, RBAK, SPDEF, SRA1, TGFB1I1 and RREB1. Interacts with ZMIZ1/ZIMP10 and ZMIZ2/ZMIP7 which both enhance its transactivation activity. Interacts with SLC30A9 and RAD54L2/ARIP4. Interacts with MACROD1 (via macro domain). Interacts via the ligand-binding domain with LXXLL and FXXLF motifs from NCOA1, NCOA2, NCOA3 and MAGEA11. Interacts (via nuclear receptor DNA binding domain and nuclear receptor ligand binding domain) with NCOA4. The AR N-terminal poly-Gln region binds Ran resulting in enhancement of AR-mediated transactivation. Ran-binding decreases as the poly-Gln length increases. Interacts with HIP1 (via coiled coil domain). Interacts (via ligand-binding domain) with TRIM68. Interacts with TNK2. Interacts with USP26. Interacts with RNF6. Interacts (regulated by RNF6 probably through polyubiquitination) with RNF14; regulates AR transcriptional activity. Interacts with PRMT2 and TRIM24. Interacts with RACK1. Interacts with RANBP10; this interaction enhances dihydrotestosterone-induced AR transcriptional activity. Interacts with PRPF6 in a hormone-independent way; this interaction enhances dihydrotestosterone-induced AR transcriptional activity. Interacts with STK4/MST1. Interacts with ZIPK/DAPK3. Interacts with LPXN. Interacts with MAK. Part of a complex containing AR, MAK and NCOA3. Interacts with CRY1. Interacts with CCAR1 and GATA2. Interacts with ZNF318. Interacts with BUD31. Interacts with ARID4A. Interacts with ARID4B. Interacts (via NR LBD domain) with ZBTB7A; the interaction is direct and androgen-dependent. Interacts with NCOR1. Interacts with NCOR2. Interacts with CRY2 in a ligand-dependent manner. In terms of processing, phosphorylated in prostate cancer cells in response to several growth factors including EGF. Phosphorylation is induced by c-Src kinase (CSK). Tyr-510 is one of the major phosphorylation sites and an increase in phosphorylation and Src kinase activity is associated with prostate cancer progression. Phosphorylation by TNK2 enhances the DNA-binding and transcriptional activity. Phosphorylation at Ser-66 by CDK9 regulates AR promoter selectivity and cell growth. Post-translationally, sumoylated on Lys-371 (major) and Lys-496. Ubiquitinated. Deubiquitinated by USP26. 'Lys-6' and 'Lys-27'-linked polyubiquitination by RNF6 modulates AR transcriptional activity and specificity. Palmitoylated by ZDHHC7 and ZDHHC21. Palmitoylation is required for plasma membrane targeting and for rapid intracellular signaling via ERK and AKT kinases and cAMP generation.

Its subcellular location is the nucleus. It is found in the cytoplasm. Functionally, steroid hormone receptors are ligand-activated transcription factors that regulate eukaryotic gene expression and affect cellular proliferation and differentiation in target tissues. Transcription factor activity is modulated by bound coactivator and corepressor proteins like ZBTB7A that recruits NCOR1 and NCOR2 to the androgen response elements/ARE on target genes, negatively regulating androgen receptor signaling and androgen-induced cell proliferation. Transcription activation is also down-regulated by NR0B2. Activated, but not phosphorylated, by HIPK3 and ZIPK/DAPK3. The protein is Androgen receptor (AR) of Papio hamadryas (Hamadryas baboon).